The chain runs to 172 residues: RNA pyrophosphohydrolase (172 aa).

The 144-residue stretch at 6 to 149 (GFRANVGIII…KRDVYRKVMK (144 aa)) folds into the Nudix hydrolase domain. The Nudix box motif lies at 38 to 59 (GGVDEGETPEEAMFRELYEEVG).

This sequence belongs to the Nudix hydrolase family. RppH subfamily. A divalent metal cation serves as cofactor.

Functionally, accelerates the degradation of transcripts by removing pyrophosphate from the 5'-end of triphosphorylated RNA, leading to a more labile monophosphorylated state that can stimulate subsequent ribonuclease cleavage. The protein is RNA pyrophosphohydrolase of Shewanella sediminis (strain HAW-EB3).